The chain runs to 219 residues: Kynurenine formamidase (219 aa).

Trp28 is a binding site for substrate. Positions 58, 62, and 64 each coordinate Zn(2+). The active-site Proton donor/acceptor is the His68. His170 and Glu182 together coordinate Zn(2+).

The protein belongs to the Cyclase 1 superfamily. KynB family. Homodimer. It depends on Zn(2+) as a cofactor.

It carries out the reaction N-formyl-L-kynurenine + H2O = L-kynurenine + formate + H(+). The protein operates within amino-acid degradation; L-tryptophan degradation via kynurenine pathway; L-kynurenine from L-tryptophan: step 2/2. In terms of biological role, catalyzes the hydrolysis of N-formyl-L-kynurenine to L-kynurenine, the second step in the kynurenine pathway of tryptophan degradation. The chain is Kynurenine formamidase from Cupriavidus pinatubonensis (strain JMP 134 / LMG 1197) (Cupriavidus necator (strain JMP 134)).